The following is a 149-amino-acid chain: Cytochrome c-type biogenesis protein CcmE (149 aa).

The Cytoplasmic portion of the chain corresponds to 1–8 (MNPKRKQR). The chain crosses the membrane as a helical; Signal-anchor for type II membrane protein span at residues 9–29 (LIIVSFLVIGVSATVGLIMAA). At 30–149 (LSSNVNHFYN…AQDAAPAQTY (120 aa)) the chain is on the periplasmic side. Heme contacts are provided by His-124 and Tyr-128.

The protein belongs to the CcmE/CycJ family.

The protein localises to the cell inner membrane. Functionally, heme chaperone required for the biogenesis of c-type cytochromes. Transiently binds heme delivered by CcmC and transfers the heme to apo-cytochromes in a process facilitated by CcmF and CcmH. The protein is Cytochrome c-type biogenesis protein CcmE of Hahella chejuensis (strain KCTC 2396).